A 210-amino-acid polypeptide reads, in one-letter code: Redox-sensing transcriptional repressor Rex (210 aa).

The segment at residues 17–56 is a DNA-binding region (H-T-H motif); that stretch reads KYHRYLYELLKNDVDRISSKELSEKIGFTASQIRQDLNCF. 91-96 contacts NAD(+); it reads GAGNIG.

The protein belongs to the transcriptional regulatory Rex family. As to quaternary structure, homodimer.

Its subcellular location is the cytoplasm. In terms of biological role, modulates transcription in response to changes in cellular NADH/NAD(+) redox state. This is Redox-sensing transcriptional repressor Rex from Clostridium botulinum (strain ATCC 19397 / Type A).